An 886-amino-acid chain; its full sequence is uncharacterized protein (886 aa).

The N-terminal stretch at 1–20 (MKIIKSLILLVLFMASPAKG) is a signal peptide. Helical transmembrane passes span 520-540 (VTIF…VEVV), 609-629 (LLFI…IITI), 647-667 (VIAF…IILM), 680-700 (ISIL…FLLI), and 779-799 (LLFY…TIVV). Residues 856–886 (EARKPQGGGEHTGKFFQNRNDVKPEQTERND) are disordered. Over residues 875–886 (NDVKPEQTERND) the composition is skewed to basic and acidic residues.

It belongs to the TrbL/VirB6 family.

Its subcellular location is the cell membrane. This is an uncharacterized protein from Rickettsia bellii (strain RML369-C).